We begin with the raw amino-acid sequence, 46 residues long: U-myrmeciitoxin(01)-Mg6a (46 aa).

The N-terminal stretch at 1-20 is a signal peptide; it reads MNLKTFCFFLLGIFVTLTVT. Positions 21-33 are excised as a propeptide; it reads VIPIANADAEADT.

Post-translationally, contains 1 disulfide bond. Expressed by the venom gland.

It localises to the secreted. This Myrmecia gulosa (Red bulldog ant) protein is U-myrmeciitoxin(01)-Mg6a.